A 502-amino-acid chain; its full sequence is MELRAEEISEIIKKQINEYGKEVEVSETGTIISIGDGIARIHGLAGAMAGELLEFPGGVSGMVLNLEEDNVGAAILGEFAEIKEGDTVKRTGRITEVPVGDALVGRVVNAIGQPIDGKGPINSSTFSKVEIKAPGIVARKSVHQPMATGLKAIDSMVPIGRGQRELIIGDRQTGKTAVAVDTIINQKGGDVICIYVAIGQKRSTVAQVVSKLTEHGAMDYTIVVAATASESAPLQFIAPYTGVTMGEYFRDNKKHALIIYDDLSKQAVAYRQLSLLLRRPPGREAYPGDVFYLHSRLLERACKLSDECGAGSLTALPIIETQAGDVSAYIPTNVISITDGQIYLESDLFFSGVRPAINVGLSVSRVGGSAQTKSMKQVAGTLRLNLAQYREMAAFAQFGSDLDKATQMQLARGERLVEILKQPQYRPIPNEKQVLVIFAANNGYLDDYPVSALKKYETELYAFFDNRQADVLTELREKQAIGDDLKAKLVSALDQFKKEFTA.

169–176 provides a ligand contact to ATP; that stretch reads GDRQTGKT.

Belongs to the ATPase alpha/beta chains family. In terms of assembly, F-type ATPases have 2 components, CF(1) - the catalytic core - and CF(0) - the membrane proton channel. CF(1) has five subunits: alpha(3), beta(3), gamma(1), delta(1), epsilon(1). CF(0) has three main subunits: a(1), b(2) and c(9-12). The alpha and beta chains form an alternating ring which encloses part of the gamma chain. CF(1) is attached to CF(0) by a central stalk formed by the gamma and epsilon chains, while a peripheral stalk is formed by the delta and b chains.

The protein resides in the cell inner membrane. It carries out the reaction ATP + H2O + 4 H(+)(in) = ADP + phosphate + 5 H(+)(out). Its function is as follows. Produces ATP from ADP in the presence of a proton gradient across the membrane. The alpha chain is a regulatory subunit. This chain is ATP synthase subunit alpha, found in Trichlorobacter lovleyi (strain ATCC BAA-1151 / DSM 17278 / SZ) (Geobacter lovleyi).